The chain runs to 139 residues: NADH-quinone oxidoreductase subunit A (139 aa).

A run of 3 helical transmembrane segments spans residues 11-31, 70-90, and 97-117; these read LWPL…MLAL, LIAI…AWAI, and WPGY…LVYL.

It belongs to the complex I subunit 3 family. NDH-1 is composed of 14 different subunits. Subunits NuoA, H, J, K, L, M, N constitute the membrane sector of the complex.

The protein resides in the cell inner membrane. The enzyme catalyses a quinone + NADH + 5 H(+)(in) = a quinol + NAD(+) + 4 H(+)(out). NDH-1 shuttles electrons from NADH, via FMN and iron-sulfur (Fe-S) centers, to quinones in the respiratory chain. The immediate electron acceptor for the enzyme in this species is believed to be ubiquinone. Couples the redox reaction to proton translocation (for every two electrons transferred, four hydrogen ions are translocated across the cytoplasmic membrane), and thus conserves the redox energy in a proton gradient. This Methylococcus capsulatus (strain ATCC 33009 / NCIMB 11132 / Bath) protein is NADH-quinone oxidoreductase subunit A.